The following is a 225-amino-acid chain: MVGMDIAKYIDHTNLKPYATKEDIIKLCDEAIQYGFYAVCVNPYRVKLAKEYLSEKKADVKVASVIGFPLGATPTEVKVFEARKALEDGADELDMVINIGALKDGDYDYVKRDIEEVVKVAHEKGAKVKVIIETCYLTEEEKIKACELAKEAGADFVKTSTGFGTGGATVEDVRLMRKVVGPEMGVKAAGGIRTYEQALAMIEAGANRIGTSSGVRIVEGARNAE.

The Proton donor/acceptor role is filled by Asp-94. Lys-158 acts as the Schiff-base intermediate with acetaldehyde in catalysis. Lys-187 (proton donor/acceptor) is an active-site residue.

This sequence belongs to the DeoC/FbaB aldolase family. DeoC type 1 subfamily.

The protein localises to the cytoplasm. It catalyses the reaction 2-deoxy-D-ribose 5-phosphate = D-glyceraldehyde 3-phosphate + acetaldehyde. It functions in the pathway carbohydrate degradation; 2-deoxy-D-ribose 1-phosphate degradation; D-glyceraldehyde 3-phosphate and acetaldehyde from 2-deoxy-alpha-D-ribose 1-phosphate: step 2/2. In terms of biological role, catalyzes a reversible aldol reaction between acetaldehyde and D-glyceraldehyde 3-phosphate to generate 2-deoxy-D-ribose 5-phosphate. The polypeptide is Deoxyribose-phosphate aldolase (Thermococcus gammatolerans (strain DSM 15229 / JCM 11827 / EJ3)).